The chain runs to 732 residues: Eukaryotic translation initiation factor 3 subunit B (732 aa).

A sufficient for interaction with HCR1 and TIF32 region spans residues 1–94; it reads MTTLESLKIE…LFIEMESVSA (94 aa). The sufficient for interaction with PIC8 stretch occupies residues 1-219; the sequence is MTTLESLKIE…GVTSWGGPNF (219 aa). The 84-residue stretch at 37–120 folds into the RRM domain; sequence NFLVVDGAPV…HRLLVNSLND (84 aa). WD repeat units lie at residues 185 to 224, 237 to 280, 439 to 481, and 507 to 554; these read ARKN…RLKR, PTEK…LMKT, EMKD…KFFA, and VDQQ…KTLN.

This sequence belongs to the eIF-3 subunit B family. In terms of assembly, component of the eukaryotic translation initiation factor 3 (eIF-3) complex.

It localises to the cytoplasm. Its function is as follows. RNA-binding component of the eukaryotic translation initiation factor 3 (eIF-3) complex, which is involved in protein synthesis of a specialized repertoire of mRNAs and, together with other initiation factors, stimulates binding of mRNA and methionyl-tRNAi to the 40S ribosome. The eIF-3 complex specifically targets and initiates translation of a subset of mRNAs involved in cell proliferation. This is Eukaryotic translation initiation factor 3 subunit B from Kluyveromyces lactis (strain ATCC 8585 / CBS 2359 / DSM 70799 / NBRC 1267 / NRRL Y-1140 / WM37) (Yeast).